We begin with the raw amino-acid sequence, 459 residues long: Protein U54 (459 aa).

An N-terminal signal peptide occupies residues Met1 to Ala20. N-linked (GlcNAc...) asparagine; by host glycans are attached at residues Asn76, Asn100, Asn281, Asn321, and Asn452.

The protein belongs to the herpesviridae UL82 family.

In Homo sapiens (Human), this protein is Protein U54 (U54).